The primary structure comprises 478 residues: Glucose-6-phosphate 1-dehydrogenase (478 aa).

Residues R48, 86–87 (DF), and K142 contribute to the NADP(+) site. H172, K176, E210, and D229 together coordinate substrate. Residue H234 is the Proton acceptor of the active site. Substrate contacts are provided by K334 and K339.

This sequence belongs to the glucose-6-phosphate dehydrogenase family.

It catalyses the reaction D-glucose 6-phosphate + NADP(+) = 6-phospho-D-glucono-1,5-lactone + NADPH + H(+). Its pathway is carbohydrate degradation; pentose phosphate pathway; D-ribulose 5-phosphate from D-glucose 6-phosphate (oxidative stage): step 1/3. Catalyzes the oxidation of glucose 6-phosphate to 6-phosphogluconolactone. This chain is Glucose-6-phosphate 1-dehydrogenase, found in Borreliella burgdorferi (strain ATCC 35210 / DSM 4680 / CIP 102532 / B31) (Borrelia burgdorferi).